The chain runs to 302 residues: Pseudouridine-5'-phosphate glycosidase (302 aa).

Glutamate 25 functions as the Proton donor in the catalytic mechanism. Substrate-binding residues include lysine 86 and valine 106. Residue aspartate 138 participates in Mn(2+) binding. 140 to 142 (SAD) is a substrate binding site. The Nucleophile role is filled by lysine 159.

It belongs to the pseudouridine-5'-phosphate glycosidase family. As to quaternary structure, homotrimer. It depends on Mn(2+) as a cofactor.

The enzyme catalyses D-ribose 5-phosphate + uracil = psi-UMP + H2O. In terms of biological role, catalyzes the reversible cleavage of pseudouridine 5'-phosphate (PsiMP) to ribose 5-phosphate and uracil. Functions biologically in the cleavage direction, as part of a pseudouridine degradation pathway. The protein is Pseudouridine-5'-phosphate glycosidase of Jannaschia sp. (strain CCS1).